A 295-amino-acid chain; its full sequence is Beta-lactamase-like protein 2 homolog (295 aa).

7 residues coordinate Zn(2+): His-79, His-81, Asp-83, His-84, His-141, Asp-160, and His-195.

This sequence belongs to the metallo-beta-lactamase superfamily. Glyoxalase II family.

This Caenorhabditis elegans protein is Beta-lactamase-like protein 2 homolog.